A 156-amino-acid chain; its full sequence is Phosphopantetheine adenylyltransferase (156 aa).

Residue threonine 9 participates in substrate binding. ATP is bound by residues 9-10 (TF) and histidine 17. Substrate-binding residues include lysine 41, leucine 73, and arginine 87. ATP-binding positions include 88-90 (GVR), glutamate 98, and 123-129 (WAFVSST).

Belongs to the bacterial CoaD family. Homohexamer. Requires Mg(2+) as cofactor.

Its subcellular location is the cytoplasm. It catalyses the reaction (R)-4'-phosphopantetheine + ATP + H(+) = 3'-dephospho-CoA + diphosphate. The protein operates within cofactor biosynthesis; coenzyme A biosynthesis; CoA from (R)-pantothenate: step 4/5. In terms of biological role, reversibly transfers an adenylyl group from ATP to 4'-phosphopantetheine, yielding dephospho-CoA (dPCoA) and pyrophosphate. The sequence is that of Phosphopantetheine adenylyltransferase from Haemophilus influenzae (strain ATCC 51907 / DSM 11121 / KW20 / Rd).